Reading from the N-terminus, the 255-residue chain is Small ribosomal subunit protein uS2 (255 aa).

This sequence belongs to the universal ribosomal protein uS2 family.

The protein is Small ribosomal subunit protein uS2 of Streptococcus pyogenes serotype M28 (strain MGAS6180).